The chain runs to 254 residues: 5'-nucleotidase SurE (254 aa).

Aspartate 8, aspartate 9, serine 40, and asparagine 93 together coordinate a divalent metal cation.

It belongs to the SurE nucleotidase family. A divalent metal cation is required as a cofactor.

It localises to the cytoplasm. The enzyme catalyses a ribonucleoside 5'-phosphate + H2O = a ribonucleoside + phosphate. Its function is as follows. Nucleotidase that shows phosphatase activity on nucleoside 5'-monophosphates. The sequence is that of 5'-nucleotidase SurE from Rhizorhabdus wittichii (strain DSM 6014 / CCUG 31198 / JCM 15750 / NBRC 105917 / EY 4224 / RW1) (Sphingomonas wittichii).